Consider the following 406-residue polypeptide: 4-hydroxy-3-methylbut-2-en-1-yl diphosphate synthase (ferredoxin) (406 aa).

4 residues coordinate [4Fe-4S] cluster: Cys-313, Cys-316, Cys-347, and Glu-354.

The protein belongs to the IspG family. Requires [4Fe-4S] cluster as cofactor.

It carries out the reaction (2E)-4-hydroxy-3-methylbut-2-enyl diphosphate + 2 oxidized [2Fe-2S]-[ferredoxin] + H2O = 2-C-methyl-D-erythritol 2,4-cyclic diphosphate + 2 reduced [2Fe-2S]-[ferredoxin] + H(+). It participates in isoprenoid biosynthesis; isopentenyl diphosphate biosynthesis via DXP pathway; isopentenyl diphosphate from 1-deoxy-D-xylulose 5-phosphate: step 5/6. Functionally, converts 2C-methyl-D-erythritol 2,4-cyclodiphosphate (ME-2,4cPP) into 1-hydroxy-2-methyl-2-(E)-butenyl 4-diphosphate. This chain is 4-hydroxy-3-methylbut-2-en-1-yl diphosphate synthase (ferredoxin), found in Picosynechococcus sp. (strain ATCC 27264 / PCC 7002 / PR-6) (Agmenellum quadruplicatum).